Reading from the N-terminus, the 81-residue chain is Toxin TdNa10 (81 aa).

Residues 1–20 form the signal peptide; the sequence is MWTFAIVLAFLLIGLDEGEA. The LCN-type CS-alpha/beta domain maps to 21–81; it reads LDGYPLSKNN…KMYPGELPCH (61 aa). Intrachain disulfides connect Cys32–Cys80, Cys36–Cys57, Cys42–Cys62, and Cys46–Cys64.

This sequence belongs to the long (4 C-C) scorpion toxin superfamily. Sodium channel inhibitor family. Beta subfamily. In terms of tissue distribution, expressed by the venom gland.

It is found in the secreted. Functionally, alpha toxins bind voltage-independently at site-3 of sodium channels (Nav) and inhibit the inactivation of the activated channels, thereby blocking neuronal transmission. This toxin binds, in vitro, to sodium channels and inhibits the inactivation of the activated channels. Seems not toxic to mice, crickets and sweet-water shrimps. This Tityus discrepans (Venezuelan scorpion) protein is Toxin TdNa10.